The following is a 187-amino-acid chain: Adenine phosphoribosyltransferase (187 aa).

133–137 (ATGGS) serves as a coordination point for AMP.

The protein belongs to the purine/pyrimidine phosphoribosyltransferase family. Homodimer. Mg(2+) is required as a cofactor.

Its subcellular location is the cytoplasm. The protein resides in the nucleus. It carries out the reaction AMP + diphosphate = 5-phospho-alpha-D-ribose 1-diphosphate + adenine. It functions in the pathway purine metabolism; AMP biosynthesis via salvage pathway; AMP from adenine: step 1/1. Its function is as follows. Catalyzes a salvage reaction resulting in the formation of AMP, that is energically less costly than de novo synthesis. The polypeptide is Adenine phosphoribosyltransferase (APT1) (Eremothecium gossypii (strain ATCC 10895 / CBS 109.51 / FGSC 9923 / NRRL Y-1056) (Yeast)).